The sequence spans 487 residues: Cysteine--tRNA ligase (487 aa).

Position 27 (C27) interacts with Zn(2+). The 'HIGH' region motif lies at 29 to 39 (ATVQGLPHVGH). The segment at 174–194 (IDDMQGAPDADPRGKKDPRDF) is disordered. The segment covering 183 to 194 (ADPRGKKDPRDF) has biased composition (basic and acidic residues). 3 residues coordinate Zn(2+): C225, H250, and E254. The 'KMSKS' region signature appears at 281–285 (KMSKS). K284 contacts ATP.

The protein belongs to the class-I aminoacyl-tRNA synthetase family. In terms of assembly, monomer. It depends on Zn(2+) as a cofactor.

Its subcellular location is the cytoplasm. The catalysed reaction is tRNA(Cys) + L-cysteine + ATP = L-cysteinyl-tRNA(Cys) + AMP + diphosphate. This Arthrobacter sp. (strain FB24) protein is Cysteine--tRNA ligase.